The primary structure comprises 201 residues: Large ribosomal subunit protein bL25 (201 aa).

The protein belongs to the bacterial ribosomal protein bL25 family. CTC subfamily. Part of the 50S ribosomal subunit; part of the 5S rRNA/L5/L18/L25 subcomplex. Contacts the 5S rRNA. Binds to the 5S rRNA independently of L5 and L18.

In terms of biological role, this is one of the proteins that binds to the 5S RNA in the ribosome where it forms part of the central protuberance. This Ectopseudomonas mendocina (strain ymp) (Pseudomonas mendocina) protein is Large ribosomal subunit protein bL25.